Here is a 93-residue protein sequence, read N- to C-terminus: Consomatin G1 (93 aa).

The first 22 residues, 1–22 (MQTAYWVMLMMMVCITAPLPEG), serve as a signal peptide directing secretion. Positions 23–69 (GKPNSGIRGLVPNDLTPQHTLRSLISRRQTDVLLDATLLTTPAPEQR) are excised as a propeptide. The cysteines at positions 72 and 77 are disulfide-linked. Trp74 is subject to D-tryptophan. Residues 79–93 (PRPYPWRRRDLNGKR) constitute a propeptide that is removed on maturation.

The protein belongs to the conotoxin C superfamily. Consomatin family. As to expression, expressed by the venom duct.

Its subcellular location is the secreted. Potently activates human somatostatin receptors (SSTR) with a specific activation of SSTR2 (EC(50)=2.6 nM). The chain is Consomatin G1 from Conus geographus (Geography cone).